Consider the following 55-residue polypeptide: Preprotein translocase subunit SecG (55 aa).

Residues M1 to Q29 are Cytoplasmic-facing. A helical transmembrane segment spans residues P30–N51. The Extracellular segment spans residues G52–P55.

Belongs to the SEC61-beta family. In terms of assembly, component of the protein translocase complex. Heterotrimer consisting of alpha (SecY), beta (SecG) and gamma (SecE) subunits. Can form oligomers of the heterotrimer.

The protein localises to the cell membrane. Involved in protein export. The function of the beta subunit is unknown, but it may be involved in stabilization of the trimeric complex. This Methanosarcina barkeri (strain Fusaro / DSM 804) protein is Preprotein translocase subunit SecG.